A 308-amino-acid chain; its full sequence is Membrane protein insertase YidC 1 (308 aa).

The signal sequence occupies residues 1-22; sequence MKSIKRFALSAMGAAMLLVLTG. Cys-23 carries N-palmitoyl cysteine lipidation. Cys-23 carries S-diacylglycerol cysteine lipidation. Transmembrane regions (helical) follow at residues 60 to 80, 135 to 155, 168 to 188, 211 to 225, and 230 to 252; these read FGVA…PLGI, FGGV…AIYF, YLGI…GVLY, MIYM…FSLF, and VTLY…NYIV. The disordered stretch occupies residues 263 to 308; that stretch reads ELAKNPSKASAFSTPSGRKDVTPEQPTAITSKKKHKNRNAGKQRSR. The segment covering 269–278 has biased composition (polar residues); the sequence is SKASAFSTPS. A compositionally biased stretch (basic residues) spans 293-308; sequence SKKKHKNRNAGKQRSR.

It belongs to the OXA1/ALB3/YidC family. Type 2 subfamily.

The protein resides in the cell membrane. Its function is as follows. Required for the insertion and/or proper folding and/or complex formation of integral membrane proteins into the membrane. Involved in integration of membrane proteins that insert both dependently and independently of the Sec translocase complex, as well as at least some lipoproteins. The polypeptide is Membrane protein insertase YidC 1 (Streptococcus pneumoniae (strain ATCC BAA-255 / R6)).